A 351-amino-acid polypeptide reads, in one-letter code: Ca(2+)/H(+) antiporter ChaA (351 aa).

11 consecutive transmembrane segments (helical) span residues 4-24 (IFFILVAAGVPLSVIGSLMHW), 25-45 (PSAVLFAVYCVTIIALASYMG), 59-79 (IGGLLNATFGNAVELIISLFA), 86-106 (GIVLASLTGSVLGNLLLVAGL), 130-150 (GLLIFAIIVAFVIPEVFSVGM), 156-176 (LNLSIGISIIMILLYVAALYF), 205-225 (VATIVLFAATIVVAYISENLV), 241-261 (FIGVIIVAIVGNAAEHASAII), 282-302 (IAMFVAPVLVICSIFFPTSMP), 303-323 (LVFTLPELVAMVSAVLLMIAI), and 331-351 (WFEGATLLAAYVIMAIGFFLL).

This sequence belongs to the Ca(2+):cation antiporter (CaCA) (TC 2.A.19) family. Cation/proton exchanger (CAX) subfamily. As to quaternary structure, homotrimer.

Its subcellular location is the cell membrane. With respect to regulation, calcium efflux is tightly regulated by intracellular pH. In terms of biological role, ca(+)/H(+) antiporter that extrudes calcium in exchange for external protons. Does not transport sodium or potassium. The protein is Ca(2+)/H(+) antiporter ChaA (chaA) of Bacillus subtilis (strain 168).